A 23-amino-acid chain; its full sequence is Caerin-4.2 (23 aa).

In terms of tissue distribution, expressed by the skin parotoid and/or rostral glands.

It is found in the secreted. Its function is as follows. Antibacterial peptide, that adopts an alpha helical conformation which can disrupt bacterial membranes. Each caerin displays a different antimicrobial specificity. This Ranoidea caerulea (Green tree frog) protein is Caerin-4.2.